Consider the following 648-residue polypeptide: Interferon-induced GTP-binding protein Mx1 (648 aa).

An N-acetylmethionine modification is found at methionine 1. A disordered region spans residues 1 to 26 (MVHSDLGIEELDSPESSLNGSEDMES). The Dynamin-type G domain occupies 56–329 (DLALPAIAVI…LIMHICKTLP (274 aa)). A G1 motif region spans residues 66-73 (GDQSSGKS). GTP is bound at residue 66–73 (GDQSSGKS). The G2 motif stretch occupies residues 91–93 (VTR). The interval 167-170 (DLPG) is G3 motif. GTP-binding positions include 167 to 171 (DLPGI) and 236 to 239 (TKPD). Residues 236–239 (TKPD) form a G4 motif region. Positions 268 to 271 (KCRG) are G5 motif. Residues 330–355 (LLENQIKETHQRITEELQKYGKDIPE) are bundle signaling element (BSE). Positions 355-522 (EEESEKMFCL…HFQMEQLVYC (168 aa)) are middle domain. A stalk region spans residues 356–618 (EESEKMFCLI…KDQYDWLLKE (263 aa)). The tract at residues 543-546 (KNKK) is critical for lipid-binding. Positions 560 to 648 (TDEIFQHLTA…ARQRLAKFPG (89 aa)) constitute a GED domain.

The protein belongs to the TRAFAC class dynamin-like GTPase superfamily. Dynamin/Fzo/YdjA family. As to quaternary structure, homooligomer. Oligomerizes into multimeric filamentous or ring-like structures by virtue of its stalk domain. Oligomerization is critical for GTPase activity, protein stability, and recognition of viral target structures. Interacts with TRPC1, TRPC3, TRPC4, TRPC5, TRPC6 and TRPC7. Interacts with HSPA5. Interacts with TUBB/TUBB5. Interacts with DDX39A and DDX39B. ISGylated. As to expression, ubiquitously expressed.

It localises to the cytoplasm. The protein resides in the endoplasmic reticulum membrane. The protein localises to the perinuclear region. It is found in the nucleus. Its function is as follows. Interferon-induced dynamin-like GTPase with antiviral activity against rabies virus (RABV), vesicular stomatitis virus (VSV) and murine pneumonia virus (MPV). Isoform 1 but not isoform 2 shows antiviral activity against vesicular stomatitis virus (VSV). The protein is Interferon-induced GTP-binding protein Mx1 (MX1) of Bos taurus (Bovine).